The following is a 152-amino-acid chain: Acidic phospholipase A2 homolog textilotoxin D chain (152 aa).

The N-terminal stretch at 1–19 (MHPAHLLVLLGVCVSLLGA) is a signal peptide. Intrachain disulfides connect Cys-38–Cys-104, Cys-54–Cys-151, Cys-56–Cys-72, Cys-71–Cys-132, Cys-78–Cys-125, Cys-88–Cys-118, and Cys-111–Cys-123. The N-linked (GlcNAc...) asparagine glycan is linked to Asn-112.

It belongs to the phospholipase A2 family. Group I subfamily. D49 sub-subfamily. Heterohexamer. 2 forms exist: 2 A or 2 B chains, 2 C chains and 2 covalently-linked D chains, and 1 A or 1 B, 1 C, 2 covalently-linked D chains and 2 differentially glycosylated covalently-linked D chains. Textilotoxin was originally described as pentameric. In terms of tissue distribution, expressed by the venom gland.

The protein localises to the secreted. Functionally, snake venom oligomeric phospholipase A2 that has potent presynaptic neurotoxicity. Chain D is not itself neurotoxic, but it is essential for the neurotoxicity of textilotoxin. Chain D possesses a very low phospholipase activity. This chain is Acidic phospholipase A2 homolog textilotoxin D chain, found in Pseudonaja textilis (Eastern brown snake).